The primary structure comprises 355 residues: Histidinol-phosphate aminotransferase (355 aa).

At Lys218 the chain carries N6-(pyridoxal phosphate)lysine.

It belongs to the class-II pyridoxal-phosphate-dependent aminotransferase family. Histidinol-phosphate aminotransferase subfamily. In terms of assembly, homodimer. Requires pyridoxal 5'-phosphate as cofactor.

The enzyme catalyses L-histidinol phosphate + 2-oxoglutarate = 3-(imidazol-4-yl)-2-oxopropyl phosphate + L-glutamate. It functions in the pathway amino-acid biosynthesis; L-histidine biosynthesis; L-histidine from 5-phospho-alpha-D-ribose 1-diphosphate: step 7/9. This is Histidinol-phosphate aminotransferase from Chlorobium limicola (strain DSM 245 / NBRC 103803 / 6330).